The primary structure comprises 129 residues: Small ribosomal subunit protein uS9 (129 aa).

It belongs to the universal ribosomal protein uS9 family.

The sequence is that of Small ribosomal subunit protein uS9 from Helicobacter acinonychis (strain Sheeba).